A 338-amino-acid chain; its full sequence is Fructose-1,6-bisphosphatase class 1 (338 aa).

Positions 92, 114, 116, and 117 each coordinate Mg(2+). Residues 117–120 (DGSS) and Asn-210 each bind substrate. Glu-284 lines the Mg(2+) pocket.

The protein belongs to the FBPase class 1 family. Homotetramer. Mg(2+) serves as cofactor.

The protein resides in the cytoplasm. It catalyses the reaction beta-D-fructose 1,6-bisphosphate + H2O = beta-D-fructose 6-phosphate + phosphate. The protein operates within carbohydrate biosynthesis; gluconeogenesis. In Halorhodospira halophila (strain DSM 244 / SL1) (Ectothiorhodospira halophila (strain DSM 244 / SL1)), this protein is Fructose-1,6-bisphosphatase class 1.